Reading from the N-terminus, the 271-residue chain is 5'-AMP-activated protein kinase subunit beta-2 (271 aa).

The segment at 1 to 47 (MGNTTSERVSGERHGAKAARAEGGGHGPGKEHKIMVGSTDDPSVFSL) is disordered. A Phosphoserine; by ULK1 modification is found at Ser38. Residue Thr39 is modified to Phosphothreonine; by ULK1. Position 68 is a phosphoserine; by ULK1 (Ser68). Phosphoserine occurs at positions 94 and 107. Position 147 is a phosphothreonine (Thr147). A phosphoserine mark is found at Ser157 and Ser169. Position 173 is a phosphoserine; by ULK1 (Ser173). Residue Ser183 is modified to Phosphoserine.

This sequence belongs to the 5'-AMP-activated protein kinase beta subunit family. As to quaternary structure, AMPK is a heterotrimer of an alpha catalytic subunit (PRKAA1 or PRKAA2), a beta (PRKAB1 or PRKAB2) and a gamma non-catalytic subunits (PRKAG1, PRKAG2 or PRKAG3). In terms of processing, phosphorylated when associated with the catalytic subunit (PRKAA1 or PRKAA2). Phosphorylated by ULK1 and ULK2; leading to negatively regulate AMPK activity and suggesting the existence of a regulatory feedback loop between ULK1, ULK2 and AMPK.

In terms of biological role, non-catalytic subunit of AMP-activated protein kinase (AMPK), an energy sensor protein kinase that plays a key role in regulating cellular energy metabolism. In response to reduction of intracellular ATP levels, AMPK activates energy-producing pathways and inhibits energy-consuming processes: inhibits protein, carbohydrate and lipid biosynthesis, as well as cell growth and proliferation. AMPK acts via direct phosphorylation of metabolic enzymes, and by longer-term effects via phosphorylation of transcription regulators. Also acts as a regulator of cellular polarity by remodeling the actin cytoskeleton; probably by indirectly activating myosin. Beta non-catalytic subunit acts as a scaffold on which the AMPK complex assembles, via its C-terminus that bridges alpha (PRKAA1 or PRKAA2) and gamma subunits (PRKAG1, PRKAG2 or PRKAG3). The sequence is that of 5'-AMP-activated protein kinase subunit beta-2 (Prkab2) from Rattus norvegicus (Rat).